The chain runs to 338 residues: NADPH dehydrogenase (338 aa).

22–25 (SPMC) contacts FMN. Tyr27 lines the substrate pocket. 2 residues coordinate FMN: Ala59 and Gln101. 163 to 166 (HAAH) contributes to the substrate binding site. FMN is bound by residues Arg214 and 306 to 307 (GR).

It belongs to the NADH:flavin oxidoreductase/NADH oxidase family. NamA subfamily. Homotetramer. It depends on FMN as a cofactor.

The catalysed reaction is A + NADPH + H(+) = AH2 + NADP(+). Catalyzes the reduction of the double bond of an array of alpha,beta-unsaturated aldehydes and ketones. It also reduces the nitro group of nitroester and nitroaromatic compounds. It could have a role in detoxification processes. The sequence is that of NADPH dehydrogenase from Listeria monocytogenes serotype 4a (strain HCC23).